Consider the following 331-residue polypeptide: uncharacterized protein (331 aa).

WD repeat units follow at residues 53 to 92 (KAHTNITGIISCDQLNGVITCGSEGEIHLWDIRSQAKSAV), 97 to 139 (QQST…KLIR), 144 to 184 (AHND…DSTD), and 300 to 331 (ASEEICRAISFDVKNDVYYSGGEDGLLQAFRV).

Its subcellular location is the cytoplasm. It is found in the nucleus. This is an uncharacterized protein from Schizosaccharomyces pombe (strain 972 / ATCC 24843) (Fission yeast).